We begin with the raw amino-acid sequence, 572 residues long: Dityrosine transporter 1 (572 aa).

Disordered regions lie at residues 1–28 (MGSE…STFH) and 49–95 (RANI…SPDT). Residues 1–110 (MGSEPFQKKN…YTYFSKDQRL (110 aa)) lie on the Cytoplasmic side of the membrane. Over residues 13–28 (LQINSQESGTTRSTFH) the composition is skewed to polar residues. Residues 50 to 62 (ANIDHDVFHEHPD) show a composition bias toward basic and acidic residues. The span at 83 to 95 (SSNSQSRDPSPDT) shows a compositional bias: polar residues. Residues 111-131 (IIFGIIIFIGFLGPMSGNIYI) traverse the membrane as a helical segment. Residues 132 to 149 (PALPLLQREYDVSATTIN) are Extracellular-facing. The helical transmembrane segment at 150-170 (ATVSVFMAVFSVGPLFWGALA) threads the bilayer. The Cytoplasmic portion of the chain corresponds to 171–184 (DFGGRKFLYMVSLS). Residues 185 to 205 (LMLIVNILLAAVPVNIAALFV) form a helical membrane-spanning segment. Residues 206-207 (LR) are Extracellular-facing. A helical transmembrane segment spans residues 208 to 228 (IFQAFASSSVISLGAGTVTDV). Topologically, residues 229–240 (VPPKHRGKAIAY) are cytoplasmic. A helical membrane pass occupies residues 241 to 261 (FMMGPNMGPIIAPIVAGLILM). The Extracellular segment spans residues 262–267 (KGNYWR). A helical membrane pass occupies residues 268-288 (WLFGFTSIMTGIALILVTALL). Topologically, residues 289-366 (PETLRCIVGN…TLYWKMIKCP (78 aa)) are cytoplasmic. Residues 367–387 (PIIITSVSTALLFSSYYAFSV) form a helical membrane-spanning segment. Topologically, residues 388 to 398 (TFSYYLEHDYR) are extracellular. Residues 399-419 (FTMLEIGAAYVCPGVAMLLGS) traverse the membrane as a helical segment. The Cytoplasmic segment spans residues 420–446 (QSGGHLSDYLRSRWIKSHPKKKFPAEF). The chain crosses the membrane as a helical span at residues 447 to 469 (RLLLNLIGILLTICGTIGYGWAI). Over 470 to 472 (FFH) the chain is Extracellular. Residues 473–493 (YHFVVLLVFSALTAFGMTWCS) traverse the membrane as a helical segment. Residues 494–520 (NTSMTYLTELFPKRAAGTVAVSSFFRN) lie on the Cytoplasmic side of the membrane. Residues 521–541 (VGAAISSAIILQLCNAMGIGW) form a helical membrane-spanning segment. Cys-542 is a topological domain (extracellular). The helical transmembrane segment at 543–563 (FTGLGLCSSISLIGILYLLIF) threads the bilayer. A required for the localization to the prospore membrane region spans residues 548–572 (LCSSISLIGILYLLIFQRKYTAKEF). Topologically, residues 564–572 (QRKYTAKEF) are cytoplasmic.

The protein belongs to the major facilitator superfamily. CAR1 family. In terms of processing, phosphorylated.

The protein localises to the prospore membrane. Prospore-specific dityrosine transporter responsible for translocation of dityrosine through the prospore membrane and required for the formation of the outermost layer of the spore. The chain is Dityrosine transporter 1 (DTR1) from Saccharomyces cerevisiae (strain ATCC 204508 / S288c) (Baker's yeast).